Consider the following 479-residue polypeptide: Glutamate--tRNA ligase 2 (479 aa).

Positions 10–20 (PSPTGSLHIGG) match the 'HIGH' region motif. Residues 243–247 (KLSKR) carry the 'KMSKS' region motif. Lys-246 provides a ligand contact to ATP.

It belongs to the class-I aminoacyl-tRNA synthetase family. Glutamate--tRNA ligase type 1 subfamily. In terms of assembly, monomer.

The protein localises to the cytoplasm. It catalyses the reaction tRNA(Glu) + L-glutamate + ATP = L-glutamyl-tRNA(Glu) + AMP + diphosphate. Functionally, catalyzes the attachment of glutamate to tRNA(Glu) in a two-step reaction: glutamate is first activated by ATP to form Glu-AMP and then transferred to the acceptor end of tRNA(Glu). This Thermoanaerobacter pseudethanolicus (strain ATCC 33223 / 39E) (Clostridium thermohydrosulfuricum) protein is Glutamate--tRNA ligase 2.